A 363-amino-acid chain; its full sequence is Uptake hydrogenase small subunit (363 aa).

A signal peptide (tat-type signal) is located at residues 1-43 (MIETFYEVMRRQGISRRSFLKYCSLTATSLGLSPVFVPKIVHA). [4Fe-4S] cluster-binding residues include C60, C63, C158, C192, H230, C233, C258, and C264. 3 residues coordinate [3Fe-4S] cluster: C273, C292, and C295.

The protein belongs to the [NiFe]/[NiFeSe] hydrogenase small subunit family. In terms of assembly, heterodimer of a large and a small subunit. [4Fe-4S] cluster is required as a cofactor. Requires [3Fe-4S] cluster as cofactor. Post-translationally, predicted to be exported by the Tat system. The position of the signal peptide cleavage has not been experimentally proven.

It is found in the cell membrane. It carries out the reaction H2 + A = AH2. In terms of biological role, this enzyme recycles the H(2) produced by nitrogenase to increase the production of ATP and to protect nitrogenase against inhibition or damage by O(2) under carbon- or phosphate-limited conditions. The protein is Uptake hydrogenase small subunit (hupS) of Alcaligenes hydrogenophilus.